The sequence spans 313 residues: 4-diphosphocytidyl-2-C-methyl-D-erythritol kinase (313 aa).

Residue lysine 10 is part of the active site. An ATP-binding site is contributed by 95-105; it reads PVTAGLGGGSS. The active site involves aspartate 136. Positions 289–313 are disordered; sequence HPRVSPWRSPRSASSPSTRRSSRPT. The span at 292 to 307 shows a compositional bias: low complexity; it reads VSPWRSPRSASSPSTR.

Belongs to the GHMP kinase family. IspE subfamily.

The enzyme catalyses 4-CDP-2-C-methyl-D-erythritol + ATP = 4-CDP-2-C-methyl-D-erythritol 2-phosphate + ADP + H(+). Its pathway is isoprenoid biosynthesis; isopentenyl diphosphate biosynthesis via DXP pathway; isopentenyl diphosphate from 1-deoxy-D-xylulose 5-phosphate: step 3/6. Catalyzes the phosphorylation of the position 2 hydroxy group of 4-diphosphocytidyl-2C-methyl-D-erythritol. In Anaeromyxobacter dehalogenans (strain 2CP-C), this protein is 4-diphosphocytidyl-2-C-methyl-D-erythritol kinase.